A 447-amino-acid chain; its full sequence is Tubulin beta-1 chain (447 aa).

GTP-binding residues include Gln11, Glu69, Ser138, Gly142, Thr143, Gly144, Asn204, and Asn226. Glu69 serves as a coordination point for Mg(2+). Residues 427 to 447 (EATADEDAEFEEEQEAEVEEN) form a disordered region. Positions 429–447 (TADEDAEFEEEQEAEVEEN) are enriched in acidic residues.

This sequence belongs to the tubulin family. Dimer of alpha and beta chains. A typical microtubule is a hollow water-filled tube with an outer diameter of 25 nm and an inner diameter of 15 nM. Alpha-beta heterodimers associate head-to-tail to form protofilaments running lengthwise along the microtubule wall with the beta-tubulin subunit facing the microtubule plus end conferring a structural polarity. Microtubules usually have 13 protofilaments but different protofilament numbers can be found in some organisms and specialized cells. Mg(2+) is required as a cofactor.

It is found in the cytoplasm. The protein localises to the cytoskeleton. Its function is as follows. Tubulin is the major constituent of microtubules, a cylinder consisting of laterally associated linear protofilaments composed of alpha- and beta-tubulin heterodimers. Microtubules grow by the addition of GTP-tubulin dimers to the microtubule end, where a stabilizing cap forms. Below the cap, tubulin dimers are in GDP-bound state, owing to GTPase activity of alpha-tubulin. This is Tubulin beta-1 chain from Glossina morsitans morsitans (Savannah tsetse fly).